The sequence spans 334 residues: tRNA dimethylallyltransferase (334 aa).

23–30 (GPTGAGKT) contacts ATP. Position 25 to 30 (25 to 30 (TGAGKT)) interacts with substrate. Interaction with substrate tRNA regions lie at residues 53–56 (DSAL) and 177–181 (QRVQR).

The protein belongs to the IPP transferase family. In terms of assembly, monomer. Requires Mg(2+) as cofactor.

The catalysed reaction is adenosine(37) in tRNA + dimethylallyl diphosphate = N(6)-dimethylallyladenosine(37) in tRNA + diphosphate. In terms of biological role, catalyzes the transfer of a dimethylallyl group onto the adenine at position 37 in tRNAs that read codons beginning with uridine, leading to the formation of N6-(dimethylallyl)adenosine (i(6)A). This is tRNA dimethylallyltransferase from Polynucleobacter necessarius subsp. necessarius (strain STIR1).